A 230-amino-acid chain; its full sequence is AA9 family lytic polysaccharide monooxygenase H (230 aa).

Positions 1–17 are cleaved as a signal peptide; that stretch reads MKTLSAGLLALASAASA. Cu(2+)-binding residues include histidine 18 and histidine 89. Cysteine 59 and cysteine 178 are disulfide-bonded. O2 contacts are provided by histidine 164 and glutamine 173. Tyrosine 175 is a Cu(2+) binding site.

Belongs to the polysaccharide monooxygenase AA9 family. Cu(2+) serves as cofactor.

It is found in the secreted. It catalyses the reaction [(1-&gt;4)-beta-D-glucosyl]n+m + reduced acceptor + O2 = 4-dehydro-beta-D-glucosyl-[(1-&gt;4)-beta-D-glucosyl]n-1 + [(1-&gt;4)-beta-D-glucosyl]m + acceptor + H2O.. Lytic polysaccharide monooxygenase (LPMO) that depolymerizes crystalline and amorphous polysaccharides via the oxidation of scissile alpha- or beta-(1-4)-glycosidic bonds, yielding primarly C1 oxidation products. Catalysis by LPMOs requires the reduction of the active-site copper from Cu(II) to Cu(I) by a reducing agent and H(2)O(2) or O(2) as a cosubstrate. Active on hemicelluloses, including xylan, glucomannan, and xyloglucan. Preferentially cleaves residual xylan in phosphoric acid-swollen cellulose (PASC). Moreover, when exposed to cellulose-xylan blends, shows a preference for xylan and for releasing oxidized xylooligosaccharides. Has no activity on ivory nut mannan (INM), a linear beta-1,4-linked mannan without substitutions. In Malbranchea cinnamomea (Thermophilic fungus), this protein is AA9 family lytic polysaccharide monooxygenase H.